The primary structure comprises 96 residues: U-scoloptoxin(06)-Sm1a (96 aa).

Residues methionine 1–alanine 23 form the signal peptide.

The protein belongs to the scoloptoxin-06 family. Contains 2 disulfide bonds. In terms of tissue distribution, expressed by the venom gland.

The protein resides in the secreted. The protein is U-scoloptoxin(06)-Sm1a of Scolopendra morsitans (Tanzanian blue ringleg centipede).